The following is a 606-amino-acid chain: 4-hydroxy-3-methylbut-2-en-1-yl diphosphate synthase (flavodoxin) (606 aa).

The [4Fe-4S] cluster site is built by C513, C516, C547, and E554.

This sequence belongs to the IspG family. Requires [4Fe-4S] cluster as cofactor.

The enzyme catalyses (2E)-4-hydroxy-3-methylbut-2-enyl diphosphate + oxidized [flavodoxin] + H2O + 2 H(+) = 2-C-methyl-D-erythritol 2,4-cyclic diphosphate + reduced [flavodoxin]. It functions in the pathway isoprenoid biosynthesis; isopentenyl diphosphate biosynthesis via DXP pathway; isopentenyl diphosphate from 1-deoxy-D-xylulose 5-phosphate: step 5/6. Converts 2C-methyl-D-erythritol 2,4-cyclodiphosphate (ME-2,4cPP) into 1-hydroxy-2-methyl-2-(E)-butenyl 4-diphosphate. This is 4-hydroxy-3-methylbut-2-en-1-yl diphosphate synthase (flavodoxin) from Chlamydia abortus (strain DSM 27085 / S26/3) (Chlamydophila abortus).